The sequence spans 479 residues: Aspartyl/glutamyl-tRNA(Asn/Gln) amidotransferase subunit B (479 aa).

This sequence belongs to the GatB/GatE family. GatB subfamily. In terms of assembly, heterotrimer of A, B and C subunits.

It carries out the reaction L-glutamyl-tRNA(Gln) + L-glutamine + ATP + H2O = L-glutaminyl-tRNA(Gln) + L-glutamate + ADP + phosphate + H(+). The catalysed reaction is L-aspartyl-tRNA(Asn) + L-glutamine + ATP + H2O = L-asparaginyl-tRNA(Asn) + L-glutamate + ADP + phosphate + 2 H(+). Allows the formation of correctly charged Asn-tRNA(Asn) or Gln-tRNA(Gln) through the transamidation of misacylated Asp-tRNA(Asn) or Glu-tRNA(Gln) in organisms which lack either or both of asparaginyl-tRNA or glutaminyl-tRNA synthetases. The reaction takes place in the presence of glutamine and ATP through an activated phospho-Asp-tRNA(Asn) or phospho-Glu-tRNA(Gln). This Geobacter sp. (strain M21) protein is Aspartyl/glutamyl-tRNA(Asn/Gln) amidotransferase subunit B.